The chain runs to 361 residues: Transcription factor MafA (361 aa).

Position 14 is a phosphoserine (Ser-14). Lys-32 is covalently cross-linked (Glycyl lysine isopeptide (Lys-Gly) (interchain with G-Cter in SUMO2)). Disordered stretches follow at residues 40–105 and 175–228; these read RFCH…VGGA and GGAD…AGHH. Residues 46-76 are compositionally biased toward low complexity; it reads PPGSLSSTPLSTPCSSVPSSPSFCAPSPGTG. At Ser-49 the chain carries Phosphoserine. Phosphothreonine is present on residues Thr-53 and Thr-57. 2 positions are modified to phosphoserine: Ser-61 and Ser-65. A compositionally biased stretch (basic residues) spans 183-211; it reads GHHHGAHHTAHHHHSAHHHHHHHHHHGGS. Residues 212–226 are compositionally biased toward gly residues; that stretch reads GHHGGGAGHGGGGAG. Residues 262-287 are basic motif; the sequence is RLKQKRRTLKNRGYAQSCRFKRVQQR. In terms of domain architecture, bZIP spans 262–325; that stretch reads RLKQKRRTLK…DLYKEKYEKL (64 aa). Residues 290-311 are leucine-zipper; that stretch reads LESEKCQLQSQVEQLKLEVGRL. The segment at 324 to 361 is disordered; that stretch reads KLAGRGGPGGAGGAGFPREPSPAQAGPGAAKGAPDFFL. Over residues 327-338 the composition is skewed to gly residues; it reads GRGGPGGAGGAG. The segment covering 345–361 has biased composition (low complexity); that stretch reads PAQAGPGAAKGAPDFFL.

The protein belongs to the bZIP family. As to quaternary structure, forms homodimers. Monomers and dimers are able to bind DNA, but the off-rate is faster for monomers. Interacts with NEUROD1 and PDX1. May interact with MAFB, FOS, JUN and PCAF. In terms of processing, ubiquitinated, leading to its degradation by the proteasome. Phosphorylated at tyrosines.

It localises to the nucleus. Functionally, transcription factor that activates insulin gene expression. Acts synergistically with NEUROD1/BETA2 and PDX1. Binds the insulin enhancer C1/RIPE3b element. Binds to consensus TRE-type MARE 5'-TGCTGACTCAGCA-3' DNA sequence. This chain is Transcription factor MafA (Mafa), found in Rattus norvegicus (Rat).